The chain runs to 515 residues: Cytochrome P450 monooxygenase mfmA (515 aa).

The chain crosses the membrane as a helical span at residues 3–23 (KISIIPIVGVALSLAIILQLG). Cys453 provides a ligand contact to heme.

It belongs to the cytochrome P450 family. It depends on heme as a cofactor.

The protein resides in the membrane. It functions in the pathway secondary metabolite biosynthesis; terpenoid biosynthesis. Cytochrome P450 monooxygenase; part of the gene cluster that mediates the biosynthesis of the phthalide-terpenoid hybrid 11'-O-desmethylfendlerol. Within the pathway, mfma and mfmC act together to convert 3,5-dimethylorsellinic acid (DMOA) into the phthalide 5,7-dihydroxy-4-(hydroxymethyl)-6-methylphthalide. MfmA performs especially an hydroxylation at C-9. The biosynthesis of 11'-O-desmethylfendlerol begins with the NR-PKS mfmB that forms 3,5-dimethylorsellinic acid (DMOA), which is then transformed into the phthalide 5,7-dihydroxy-4-(hydroxymethyl)-6-methylphthalide by the cytochrome P450 monooxygenase mfmA and the hydrolase mfmC. Subsequently, the methyltransferase mfmE catalyzes 7-O-methylation to yield 5-hydroxy-4-(hydroxymethyl)-7-methoxy-6-methylphthalide, which undergoes C-3 hydroxylation by the cytochrome P450 monooxygenase mfmF. The resultant cyclopolic acid (2,5-dihydroxy-4-(hydroxymethyl)-7-methoxy-6-methylphthalide) is then farnesylated by the DMATS-type prenyltransferase mfmD to afford 5-O-farnesylcyclopolic acid. Finally, the Pyr4-family terpene cyclase mfmH cyclizes the farnesyl moiety of 5-O-farnesylcyclopolic acid into a drimane-like structure, thus completing the biosynthesis of 11'-O-desmethylfendlerol. The sequence is that of Cytochrome P450 monooxygenase mfmA from Annulohypoxylon moriforme (Filamentous fungus).